Here is a 605-residue protein sequence, read N- to C-terminus: Elongation factor 4 (605 aa).

A tr-type G domain is found at 9-192; that stretch reads NRIRNFCIIA…AIVQRIPAPA (184 aa). GTP-binding positions include 21-26 and 139-142; these read DHGKST and NKID.

It belongs to the TRAFAC class translation factor GTPase superfamily. Classic translation factor GTPase family. LepA subfamily.

The protein resides in the cell inner membrane. The enzyme catalyses GTP + H2O = GDP + phosphate + H(+). Its function is as follows. Required for accurate and efficient protein synthesis under certain stress conditions. May act as a fidelity factor of the translation reaction, by catalyzing a one-codon backward translocation of tRNAs on improperly translocated ribosomes. Back-translocation proceeds from a post-translocation (POST) complex to a pre-translocation (PRE) complex, thus giving elongation factor G a second chance to translocate the tRNAs correctly. Binds to ribosomes in a GTP-dependent manner. The protein is Elongation factor 4 of Pelodictyon phaeoclathratiforme (strain DSM 5477 / BU-1).